The chain runs to 74 residues: uncharacterized protein (74 aa).

This is an uncharacterized protein from Rickettsia conorii (strain ATCC VR-613 / Malish 7).